Here is a 209-residue protein sequence, read N- to C-terminus: Protein lin-28 homolog A (209 aa).

The interval 1–31 (MGSVSNQQFAGGCAKAAEEAPEEAPEDAARA) is disordered. G2 carries the post-translational modification N-acetylglycine. The residue at position 3 (S3) is a Phosphoserine. The region spanning 39–112 (HGAGICKWFN…GLESIRVTGP (74 aa)) is the CSD domain. A flexible linker region spans residues 113 to 136 (GGVFCIGSERRPKGKSMQKRRSKG). The residue at position 120 (S120) is a Phosphoserine. 2 CCHC-type zinc fingers span residues 137 to 154 (DRCY…ECKL) and 159 to 176 (KKCH…SCPL). The interval 178–209 (AQQGPSAQGKPTYFREEEEEIHSPTLLPEAQN) is disordered. The residue at position 200 (S200) is a Phosphoserine.

The protein belongs to the lin-28 family. In terms of assembly, monomer. During skeletal muscle differentiation, associated with translation initiation complexes in the polysomal compartment. Directly interacts with EIF3S2. Interacts with NCL in an RNA-dependent manner. Interacts (via C-terminus) with DHX9 (via N- and C-terminus); this interaction occurs in a RNA-independent manner. Interacts with TUT4 in the presence of pre-let-7 RNA. Expressed in embryonic stem cells, placenta and testis. Tends to be up-regulated in HER2-overexpressing breast tumors.

The protein resides in the cytoplasm. It localises to the rough endoplasmic reticulum. It is found in the P-body. Its subcellular location is the stress granule. The protein localises to the nucleus. The protein resides in the nucleolus. Its function is as follows. RNA-binding protein that inhibits processing of pre-let-7 miRNAs and regulates translation of mRNAs that control developmental timing, pluripotency and metabolism. Seems to recognize a common structural G-quartet (G4) feature in its miRNA and mRNA targets. 'Translational enhancer' that drives specific mRNAs to polysomes and increases the efficiency of protein synthesis. Its association with the translational machinery and target mRNAs results in an increased number of initiation events per molecule of mRNA and, indirectly, in mRNA stabilization. Binds IGF2 mRNA, MYOD1 mRNA, ARBP/36B4 ribosomal protein mRNA and its own mRNA. Essential for skeletal muscle differentiation program through the translational up-regulation of IGF2 expression. Suppressor of microRNA (miRNA) biogenesis, including that of let-7, miR107, miR-143 and miR-200c. Specifically binds the miRNA precursors (pre-miRNAs), recognizing an 5'-GGAG-3' motif found in pre-miRNA terminal loop, and recruits TUT4 and TUT7 uridylyltransferases. This results in the terminal uridylation of target pre-miRNAs. Uridylated pre-miRNAs fail to be processed by Dicer and undergo degradation. The repression of let-7 expression is required for normal development and contributes to maintain the pluripotent state by preventing let-7-mediated differentiation of embryonic stem cells. Localized to the periendoplasmic reticulum area, binds to a large number of spliced mRNAs and inhibits the translation of mRNAs destined for the ER, reducing the synthesis of transmembrane proteins, ER or Golgi lumen proteins, and secretory proteins. Binds to and enhances the translation of mRNAs for several metabolic enzymes, such as PFKP, PDHA1 or SDHA, increasing glycolysis and oxidative phosphorylation. Which, with the let-7 repression may enhance tissue repair in adult tissue. This Homo sapiens (Human) protein is Protein lin-28 homolog A (LIN28A).